The following is a 151-amino-acid chain: tRNA-specific adenosine deaminase (151 aa).

The CMP/dCMP-type deaminase domain maps to 4–122 (NRDSYWMKIA…PFLKKIFINL (119 aa)). A Zn(2+)-binding site is contributed by H55. The active-site Proton donor is E57. 2 residues coordinate Zn(2+): C85 and C88.

This sequence belongs to the cytidine and deoxycytidylate deaminase family. As to quaternary structure, homodimer. Zn(2+) is required as a cofactor.

It carries out the reaction adenosine(34) in tRNA + H2O + H(+) = inosine(34) in tRNA + NH4(+). Catalyzes the deamination of adenosine to inosine at the wobble position 34 of tRNA(Arg2). In Buchnera aphidicola subsp. Schizaphis graminum (strain Sg), this protein is tRNA-specific adenosine deaminase.